A 328-amino-acid chain; its full sequence is POU domain, class 5, transcription factor 2 (328 aa).

The disordered stretch occupies residues 1–25; the sequence is MAGHRPSNHFCPLPGSGGGGPRGPM. A POU-specific domain is found at 118–192; the sequence is DISGILKELQ…LLKKWLKEVE (75 aa). Positions 210-269 form a DNA-binding region, homeobox; that stretch reads GKWRRASRERRIGNSLEKFFQRCPKPTPQQISHIAGCLQLQKDVVRVWFYNRSKMGSRPT.

It belongs to the POU transcription factor family. Class-5 subfamily. Expressed in skeletal and cardiac muscles, brain, heart and lung. Little or no detectable expression found in pancreas, kidney, liver or placenta.

Its subcellular location is the nucleus. In terms of biological role, transcription factor that binds preferentially to the octamer motif (5'-ATGTTAAT-3'). May exert a regulatory function in meiotic events that are required for terminal differentiation of male germ cell. The polypeptide is POU domain, class 5, transcription factor 2 (POU5F2) (Homo sapiens (Human)).